The sequence spans 504 residues: Probable cytosol aminopeptidase (504 aa).

Residues Lys-276 and Asp-281 each coordinate Mn(2+). Residue Lys-288 is part of the active site. Residues Asp-299, Asp-358, and Glu-360 each contribute to the Mn(2+) site. Arg-362 is an active-site residue.

The protein belongs to the peptidase M17 family. Mn(2+) is required as a cofactor.

The protein resides in the cytoplasm. The catalysed reaction is Release of an N-terminal amino acid, Xaa-|-Yaa-, in which Xaa is preferably Leu, but may be other amino acids including Pro although not Arg or Lys, and Yaa may be Pro. Amino acid amides and methyl esters are also readily hydrolyzed, but rates on arylamides are exceedingly low.. The enzyme catalyses Release of an N-terminal amino acid, preferentially leucine, but not glutamic or aspartic acids.. Functionally, presumably involved in the processing and regular turnover of intracellular proteins. Catalyzes the removal of unsubstituted N-terminal amino acids from various peptides. The sequence is that of Probable cytosol aminopeptidase from Bordetella avium (strain 197N).